The primary structure comprises 306 residues: Pantothenate kinase (306 aa).

ATP is bound at residue 91–98 (GSVAVGKS).

This sequence belongs to the prokaryotic pantothenate kinase family.

Its subcellular location is the cytoplasm. The enzyme catalyses (R)-pantothenate + ATP = (R)-4'-phosphopantothenate + ADP + H(+). It functions in the pathway cofactor biosynthesis; coenzyme A biosynthesis; CoA from (R)-pantothenate: step 1/5. This is Pantothenate kinase from Streptococcus pyogenes serotype M5 (strain Manfredo).